Reading from the N-terminus, the 257-residue chain is MTEFVVAIPARYAASRLPGKPLRLLGGEPLVLHVARRALQAGAGEVWVATDDQRIADALSGLAEVKVAMTAASHASGTDRLAECARIAGWADDTVVVNLQGDEPFAPAAGIRAVAEALVGGNAPMSTLATTVEDAHTLFDPNVVKLVRNVRNEAMYFSRAPIAWHRDGFARSRDTLPAGHNWLRHIGIYGYRAGFLQQFAAMPPGQLEQVESLEQLRVLEAGFPISVAISPEPFPPGIDTPEDLERAEVLLQAMAAR.

This sequence belongs to the KdsB family.

The protein localises to the cytoplasm. It carries out the reaction 3-deoxy-alpha-D-manno-oct-2-ulosonate + CTP = CMP-3-deoxy-beta-D-manno-octulosonate + diphosphate. It participates in nucleotide-sugar biosynthesis; CMP-3-deoxy-D-manno-octulosonate biosynthesis; CMP-3-deoxy-D-manno-octulosonate from 3-deoxy-D-manno-octulosonate and CTP: step 1/1. It functions in the pathway bacterial outer membrane biogenesis; lipopolysaccharide biosynthesis. Its function is as follows. Activates KDO (a required 8-carbon sugar) for incorporation into bacterial lipopolysaccharide in Gram-negative bacteria. This is 3-deoxy-manno-octulosonate cytidylyltransferase from Stenotrophomonas maltophilia (strain R551-3).